Reading from the N-terminus, the 399-residue chain is Inositol polyphosphate 1-phosphatase (399 aa).

Residue Asp-54 coordinates Li(+). Glu-79 serves as a coordination point for Mg(2+). A Li(+)-binding site is contributed by Glu-80. Mg(2+)-binding residues include Asp-153 and Ile-155. 1D-myo-inositol 1,4-bisphosphate contacts are provided by Asp-156, Ser-157, Thr-158, Ser-267, Lys-269, Gly-289, Ala-290, Lys-293, and Thr-311. Asp-316 contributes to the Mg(2+) binding site. At Ser-317 the chain carries Phosphoserine.

Belongs to the inositol monophosphatase superfamily. As to quaternary structure, monomer. Requires Mg(2+) as cofactor. In terms of tissue distribution, ubiquitously expressed, with highest levels in pancreas and kidney.

It catalyses the reaction 1D-myo-inositol 1,4-bisphosphate + H2O = 1D-myo-inositol 4-phosphate + phosphate. It carries out the reaction 1D-myo-inositol 1,3,4-trisphosphate + H2O = 1D-myo-inositol 3,4-bisphosphate + phosphate. Its pathway is signal transduction; phosphatidylinositol signaling pathway. With respect to regulation, inhibited by Li(+). In terms of biological role, mg(2+)-dependent phosphatase that catalyzes the hydrolysis of the 1-position phosphate from inositol 1,4-bisphosphate and inositol 1,3,4-trisphosphate and participates in inositol phosphate metabolism. The polypeptide is Inositol polyphosphate 1-phosphatase (Homo sapiens (Human)).